The primary structure comprises 59 residues: Potassium channel toxin alpha-KTx 1.1 (59 aa).

Residues 1–22 (MKILSVLLLALIICSIVGWSEA) form the signal peptide. At Gln-23 the chain carries Pyrrolidone carboxylic acid. 3 disulfides stabilise this stretch: Cys-29/Cys-50, Cys-35/Cys-55, and Cys-39/Cys-57. Residues 48 to 55 (GKCMNKKC) form an interaction with Ca(2+)-activated K(+) channels region.

This sequence belongs to the short scorpion toxin superfamily. Potassium channel inhibitor family. Alpha-KTx 01 subfamily. Expressed by the venom gland.

The protein localises to the secreted. Its function is as follows. This toxin inhibits numerous potassium channels: shaker (Ki=227 nM), Kv1.2/KCNA2 (nanomolar range), Kv1.3/KCNA3 (nanomolar range), Kv1.5/KCNA5 (Kd&gt;100 nM), Kv1.6/KCNA6 (Ki=22 nM), KCa1.1/KCNMA1 (IC(50)=5.9 nM). It blocks channel activity by a simple bimolecular inhibition process. It also shows a weak interaction with nicotinic acetylcholine receptors (nAChR), suggesting it may weakly inhibit it. It also exhibits pH-specific antimicrobial activities against bacteria (B.subtilis, E.coli and S.aureus) and the fungus C.albicans. This chain is Potassium channel toxin alpha-KTx 1.1, found in Leiurus hebraeus (Hebrew deathstalker scorpion).